A 119-amino-acid polypeptide reads, in one-letter code: Integration host factor subunit beta (119 aa).

Positions 93-119 are disordered; the sequence is AGGLADTQPDGDAPDQPQPTLLGLHAM. Positions 97-112 are enriched in low complexity; it reads ADTQPDGDAPDQPQPT.

The protein belongs to the bacterial histone-like protein family. In terms of assembly, heterodimer of an alpha and a beta chain.

In terms of biological role, this protein is one of the two subunits of integration host factor, a specific DNA-binding protein that functions in genetic recombination as well as in transcriptional and translational control. This Bordetella petrii (strain ATCC BAA-461 / DSM 12804 / CCUG 43448) protein is Integration host factor subunit beta.